We begin with the raw amino-acid sequence, 299 residues long: 4-hydroxy-tetrahydrodipicolinate synthase (299 aa).

A pyruvate-binding site is contributed by threonine 45. The Proton donor/acceptor role is filled by tyrosine 133. Residue lysine 161 is the Schiff-base intermediate with substrate of the active site. Isoleucine 203 serves as a coordination point for pyruvate.

The protein belongs to the DapA family. Homotetramer; dimer of dimers.

The protein resides in the cytoplasm. The enzyme catalyses L-aspartate 4-semialdehyde + pyruvate = (2S,4S)-4-hydroxy-2,3,4,5-tetrahydrodipicolinate + H2O + H(+). It functions in the pathway amino-acid biosynthesis; L-lysine biosynthesis via DAP pathway; (S)-tetrahydrodipicolinate from L-aspartate: step 3/4. Catalyzes the condensation of (S)-aspartate-beta-semialdehyde [(S)-ASA] and pyruvate to 4-hydroxy-tetrahydrodipicolinate (HTPA). In Blochmanniella pennsylvanica (strain BPEN), this protein is 4-hydroxy-tetrahydrodipicolinate synthase.